The sequence spans 302 residues: Mediator of RNA polymerase II transcription subunit 6 (302 aa).

A disordered region spans residues 260–281 (ATGQTGATSRFENGSSRSSTDA).

The protein belongs to the Mediator complex subunit 6 family. In terms of assembly, component of the Mediator complex.

The protein localises to the nucleus. Functionally, component of the Mediator complex, a coactivator involved in the regulated transcription of nearly all RNA polymerase II-dependent genes. Mediator functions as a bridge to convey information from gene-specific regulatory proteins to the basal RNA polymerase II transcription machinery. Mediator is recruited to promoters by direct interactions with regulatory proteins and serves as a scaffold for the assembly of a functional preinitiation complex with RNA polymerase II and the general transcription factors. The polypeptide is Mediator of RNA polymerase II transcription subunit 6 (MED6) (Candida glabrata (strain ATCC 2001 / BCRC 20586 / JCM 3761 / NBRC 0622 / NRRL Y-65 / CBS 138) (Yeast)).